Here is an 870-residue protein sequence, read N- to C-terminus: Eukaryotic translation initiation factor 3 subunit C (870 aa).

The segment at 1–92 is disordered; sequence MSRFFRGDSS…GVKVVKSAKN (92 aa). A compositionally biased stretch (acidic residues) spans 14–54; sequence SSDEEEDLYSDDEEVQEQPEEESEEDDSEEDDDDDDSDSSS. The PCI domain maps to 608 to 782; that stretch reads FHMHINLELL…SSIIFRKGVE (175 aa). Residues 807–870 form a disordered region; sequence TLETRTQGTA…ALGAAVGSRA (64 aa). Over residues 824–844 the composition is skewed to gly residues; the sequence is GRGGRGGNRGGRGGNRGGRGG.

The protein belongs to the eIF-3 subunit C family. As to quaternary structure, component of the eukaryotic translation initiation factor 3 (eIF-3) complex.

The protein localises to the cytoplasm. Functionally, component of the eukaryotic translation initiation factor 3 (eIF-3) complex, which is involved in protein synthesis of a specialized repertoire of mRNAs and, together with other initiation factors, stimulates binding of mRNA and methionyl-tRNAi to the 40S ribosome. The eIF-3 complex specifically targets and initiates translation of a subset of mRNAs involved in cell proliferation. The sequence is that of Eukaryotic translation initiation factor 3 subunit C (nip1) from Sclerotinia sclerotiorum (strain ATCC 18683 / 1980 / Ss-1) (White mold).